Reading from the N-terminus, the 183-residue chain is Large ribosomal subunit protein eL18 (183 aa).

The tract at residues 150 to 183 (RHFGPAPGAPRSHTKPYVRTKGHEKARPSRRANV) is disordered.

It belongs to the eukaryotic ribosomal protein eL18 family.

It localises to the cytoplasm. In Bombyx mori (Silk moth), this protein is Large ribosomal subunit protein eL18 (RpL18).